The sequence spans 1239 residues: Anillin (1239 aa).

4 disordered regions span residues 32 to 67, 230 to 265, 493 to 621, and 684 to 716; these read CSVP…SGGG, EAPP…RTKQ, FDNQ…MCNG, and GSTQ…NSFS. Over residues 53–63 the composition is skewed to low complexity; the sequence is RSRSPGGQSAA. An interaction with and bundling of F-actin region spans residues 126-371; sequence EQAEGGALNP…ENKGTGGQSQ (246 aa). A compositionally biased stretch (basic and acidic residues) spans 252–265; that stretch reads PKKDEVDEASRTKQ. The segment covering 500-518 has biased composition (low complexity); that stretch reads SSVAAQARPPAPAPSRVVR. Pro residues predominate over residues 519–528; that stretch reads PMPPPPPPPI. Residues 551-563 show a composition bias toward basic and acidic residues; sequence EDSKRARKSHSDR. The segment covering 594–610 has biased composition (acidic residues); it reads DEEETESCMDESDDQSQ. A compositionally biased stretch (polar residues) spans 699–716; the sequence is ASRLSLGSKGTTASNSFS. Ser712 is subject to Phosphoserine. Phosphothreonine is present on Thr740. Phosphoserine occurs at positions 744 and 754. At Thr831 the chain carries Phosphothreonine. Residues 834–861 are a coiled coil; that stretch reads DDEEMQNAREVNDASQAQDKIKKLLSEV. The region spanning 1106–1230 is the PH domain; the sequence is SVEYKGFLTM…WCAYLNKALT (125 aa).

Interacts with and bundles F-actin. In terms of tissue distribution, accumulates in the ring canals that interconnect cells of the germline cysts in males and the ovarian follicles in females. These structures develop from arrested contractile rings after a specialized cytokinesis in which the closing of the invaginating plasma membrane is incomplete. Also concentrates in the arrested cleavage furrows that initially link the oocyte to its 15 nurse cells in the early egg chamber and is subsequently lost from these furrows as germline cell division is completed.

It is found in the nucleus. It localises to the cytoplasm. The protein resides in the cytoskeleton. Its subcellular location is the cell cortex. The protein localises to the cell projection. It is found in the cilium. It localises to the flagellum. In terms of biological role, required for cytokinesis. Essential for the structural integrity of the cleavage furrow and for completion of cleavage furrow ingression and proper formation of the midbody. Required during cellularization of syncytial embryos for the proper formation and function of the furrow canals, the stable inward folds of the plasma membrane which separate the peripheral nuclei. Also required for the formation of the pole cells, the progenitors of the adult germline which are formed by cytokinesis of the cytoplasmic buds at the posterior pole of the syncytial embryo. Essential for embryonic viability. The polypeptide is Anillin (scra) (Drosophila melanogaster (Fruit fly)).